The chain runs to 146 residues: Hemoglobin subunit beta-1 (146 aa).

Positions 2–146 (GLTAHDRQLI…IADALGKGYH (145 aa)) constitute a Globin domain. The heme b site is built by H63 and H92.

This sequence belongs to the globin family. In terms of assembly, heterotetramer of two alpha chains and two beta chains. Red blood cells.

Involved in oxygen transport from the lung to the various peripheral tissues. This Xenopus borealis (Kenyan clawed frog) protein is Hemoglobin subunit beta-1 (hbb1).